Reading from the N-terminus, the 272-residue chain is EID1-like F-box protein 3 (272 aa).

The F-box domain maps to Ser-29 to Ala-81.

The protein is EID1-like F-box protein 3 (EDL3) of Arabidopsis thaliana (Mouse-ear cress).